A 360-amino-acid chain; its full sequence is Phospho-N-acetylmuramoyl-pentapeptide-transferase (360 aa).

The next 10 helical transmembrane spans lie at 21 to 41 (YLTL…LWLG), 73 to 93 (TMGG…WGDL), 94 to 114 (TNHY…IGWV), 145 to 165 (AVTL…VPLF), 168 to 188 (VVVP…VGSS), 199 to 219 (GLAI…AYAS), 236 to 256 (AGEL…FLWF), 263 to 283 (VFMG…VAVI), 288 to 308 (IVLF…MLQV), and 339 to 359 (IVRF…TLKI).

It belongs to the glycosyltransferase 4 family. MraY subfamily. Requires Mg(2+) as cofactor.

Its subcellular location is the cell inner membrane. The catalysed reaction is UDP-N-acetyl-alpha-D-muramoyl-L-alanyl-gamma-D-glutamyl-meso-2,6-diaminopimeloyl-D-alanyl-D-alanine + di-trans,octa-cis-undecaprenyl phosphate = di-trans,octa-cis-undecaprenyl diphospho-N-acetyl-alpha-D-muramoyl-L-alanyl-D-glutamyl-meso-2,6-diaminopimeloyl-D-alanyl-D-alanine + UMP. Its pathway is cell wall biogenesis; peptidoglycan biosynthesis. Catalyzes the initial step of the lipid cycle reactions in the biosynthesis of the cell wall peptidoglycan: transfers peptidoglycan precursor phospho-MurNAc-pentapeptide from UDP-MurNAc-pentapeptide onto the lipid carrier undecaprenyl phosphate, yielding undecaprenyl-pyrophosphoryl-MurNAc-pentapeptide, known as lipid I. In Chromohalobacter salexigens (strain ATCC BAA-138 / DSM 3043 / CIP 106854 / NCIMB 13768 / 1H11), this protein is Phospho-N-acetylmuramoyl-pentapeptide-transferase.